Here is a 497-residue protein sequence, read N- to C-terminus: Glutamyl-tRNA(Gln) amidotransferase subunit A (497 aa).

Residues K91 and S166 each act as charge relay system in the active site. The tract at residues 143 to 171 is disordered; it reads SSTENSAYGPTHNPWDLERTAGGSGGGSS. The active-site Acyl-ester intermediate is the S190.

The protein belongs to the amidase family. GatA subfamily. In terms of assembly, heterotrimer of A, B and C subunits.

It catalyses the reaction L-glutamyl-tRNA(Gln) + L-glutamine + ATP + H2O = L-glutaminyl-tRNA(Gln) + L-glutamate + ADP + phosphate + H(+). Functionally, allows the formation of correctly charged Gln-tRNA(Gln) through the transamidation of misacylated Glu-tRNA(Gln) in organisms which lack glutaminyl-tRNA synthetase. The reaction takes place in the presence of glutamine and ATP through an activated gamma-phospho-Glu-tRNA(Gln). This is Glutamyl-tRNA(Gln) amidotransferase subunit A from Corynebacterium glutamicum (strain R).